The chain runs to 548 residues: tRNA (guanine(26)-N(2))-dimethyltransferase (548 aa).

Residues 30 to 470 (ASLTEGSAII…APWSFVWDVL (441 aa)) enclose the Trm1 methyltransferase domain. Residues Arg-57, Arg-137, Asp-155, and Ala-186 each contribute to the S-adenosyl-L-methionine site. Cys-317, Cys-320, Cys-354, and Cys-357 together coordinate Zn(2+). The interval 523-548 (QMNPTENWGPKSKPGKRTIAEVDSKS) is disordered.

This sequence belongs to the class I-like SAM-binding methyltransferase superfamily. Trm1 family.

It localises to the mitochondrion. Its subcellular location is the nucleus. The protein localises to the cytoplasm. It catalyses the reaction guanosine(26) in tRNA + 2 S-adenosyl-L-methionine = N(2)-dimethylguanosine(26) in tRNA + 2 S-adenosyl-L-homocysteine + 2 H(+). In terms of biological role, dimethylates a single guanine residue at position 26 of nuclear- and mitochondrial-encoded tRNAs using S-adenosyl-L-methionine as donor of the methyl groups. Also has tRNA strand annealing and dissociation activity independently of its tRNA guanine-dimethyltransferase activity. In Schizosaccharomyces pombe (strain 972 / ATCC 24843) (Fission yeast), this protein is tRNA (guanine(26)-N(2))-dimethyltransferase.